A 196-amino-acid polypeptide reads, in one-letter code: HTH-type transcriptional regulator EcpR (196 aa).

An HTH luxR-type domain is found at 138–196 (KDIKKDKITDREMEIIRMTAQGMQPKSIARIENCSVKTVYTHRRNAEAKLYSKIYKLVQ). A DNA-binding region (H-T-H motif) is located at residues 162–181 (PKSIARIENCSVKTVYTHRR).

This sequence belongs to the EcpR/MatA family.

It localises to the cytoplasm. Functionally, part of the ecpRABCDE operon, which encodes the E.coli common pilus (ECP). ECP is found in both commensal and pathogenic strains and plays a dual role in early-stage biofilm development and host cell recognition. Positively regulates the expression of the ecp operon. This Escherichia coli (strain K12 / DH10B) protein is HTH-type transcriptional regulator EcpR (ecpR).